A 234-amino-acid chain; its full sequence is Homeobox protein ceh-51 (234 aa).

Disordered regions lie at residues 128 to 154 and 209 to 234; these read PPSF…RTPF and QIKQ…HVIS. Residues 147–206 constitute a DNA-binding region (homeobox); sequence RRGARTPFSDSQLYALRTRFEQCDTIKVDERRKLGAVIGLSPEQIKIWFQNRRFKLRKEK. Over residues 220-234 the composition is skewed to basic and acidic residues; it reads SAKEEAEEDQKHVIS.

The protein belongs to the NK-2 homeobox family.

It is found in the nucleus. Its function is as follows. Required for mesoderm development, including specification of muscle and coelomocyte precursors. In Caenorhabditis elegans, this protein is Homeobox protein ceh-51.